The sequence spans 88 residues: EMBRYO SURROUNDING FACTOR 1-like protein 11 (88 aa).

A signal peptide spans 1-23 (MISSSHFAIFCIILVSLFALQQY). 4 disulfide bridges follow: Cys44-Cys59, Cys49-Cys78, Cys57-Cys74, and Cys60-Cys67.

Belongs to the MEG family. Expressed in stems.

This is EMBRYO SURROUNDING FACTOR 1-like protein 11 (ESFL11) from Arabidopsis thaliana (Mouse-ear cress).